We begin with the raw amino-acid sequence, 241 residues long: Proteasome subunit alpha (241 aa).

Belongs to the peptidase T1A family. In terms of assembly, the 20S proteasome core is composed of 14 alpha and 14 beta subunits that assemble into four stacked heptameric rings, resulting in a barrel-shaped structure. The two inner rings, each composed of seven catalytic beta subunits, are sandwiched by two outer rings, each composed of seven alpha subunits. The catalytic chamber with the active sites is on the inside of the barrel. Has a gated structure, the ends of the cylinder being occluded by the N-termini of the alpha-subunits. Is capped at one or both ends by the proteasome regulatory ATPase, PAN.

It is found in the cytoplasm. The formation of the proteasomal ATPase PAN-20S proteasome complex, via the docking of the C-termini of PAN into the intersubunit pockets in the alpha-rings, triggers opening of the gate for substrate entry. Interconversion between the open-gate and close-gate conformations leads to a dynamic regulation of the 20S proteasome proteolysis activity. Component of the proteasome core, a large protease complex with broad specificity involved in protein degradation. The chain is Proteasome subunit alpha from Saccharolobus islandicus (strain M.16.4 / Kamchatka #3) (Sulfolobus islandicus).